We begin with the raw amino-acid sequence, 562 residues long: Ribonuclease Y (562 aa).

The chain crosses the membrane as a helical span at residues 1–21; that stretch reads MNMLYFVLALLVGLAGGFFVG. The segment at 108-129 is disordered; it reads AAQDAARERETLSADRQETRRE. A KH domain is found at 252–312; the sequence is SVSVVPIPND…VRREVARHVL (61 aa). Positions 378–471 constitute an HD domain; that stretch reads VLKHSVQVAH…VAAADAISAA (94 aa).

It belongs to the RNase Y family.

The protein localises to the cell membrane. Endoribonuclease that initiates mRNA decay. In Deinococcus geothermalis (strain DSM 11300 / CIP 105573 / AG-3a), this protein is Ribonuclease Y.